Here is a 358-residue protein sequence, read N- to C-terminus: Cinnamyl alcohol dehydrogenase 1 (358 aa).

Residues 21 to 349 (GILTPYTYTL…KNDVRYRFVV (329 aa)) form the Enoyl reductase (ER) domain. Cys-48 lines the Zn(2+) pocket. Ser-50 provides a ligand contact to NADP(+). The Zn(2+) site is built by His-70, Glu-71, Cys-101, Cys-104, Cys-107, Cys-115, and Cys-164. Residues Thr-168, 189–194 (GLGGVG), 212–217 (SSSDKK), Thr-252, Gly-276, and 299–301 (SFV) each bind NADP(+).

The protein belongs to the zinc-containing alcohol dehydrogenase family. Homodimer. It depends on Zn(2+) as a cofactor.

The catalysed reaction is (E)-cinnamyl alcohol + NADP(+) = (E)-cinnamaldehyde + NADPH + H(+). It catalyses the reaction (E)-coniferol + NADP(+) = (E)-coniferaldehyde + NADPH + H(+). The enzyme catalyses (E)-sinapyl alcohol + NADP(+) = (E)-sinapaldehyde + NADPH + H(+). It carries out the reaction (E)-4-coumaroyl alcohol + NADP(+) = (E)-4-coumaraldehyde + NADPH + H(+). Its pathway is aromatic compound metabolism; phenylpropanoid biosynthesis. Involved in lignin biosynthesis. Catalyzes the final step specific for the production of lignin monomers. Catalyzes the NADPH-dependent reduction of coniferaldehyde, 5-hydroxyconiferaldehyde, sinapaldehyde, 4-coumaraldehyde and caffeyl aldehyde to their respective alcohols. Can use coumaraldehyde and, with a lower efficiency, coniferaldehyde and sinapaldehyde as substrates. The sequence is that of Cinnamyl alcohol dehydrogenase 1 from Medicago truncatula (Barrel medic).